The sequence spans 368 residues: Probable dual-specificity RNA methyltransferase RlmN (368 aa).

The Proton acceptor role is filled by E109. The Radical SAM core domain maps to 115-355 (YPDRVTMCIS…VTVRDTRGQE (241 aa)). C122 and C360 are oxidised to a cystine. The [4Fe-4S] cluster site is built by C129, C133, and C136. S-adenosyl-L-methionine contacts are provided by residues 184–185 (GE), S218, 241–243 (SLH), and N317. The S-methylcysteine intermediate role is filled by C360.

Belongs to the radical SAM superfamily. RlmN family. Requires [4Fe-4S] cluster as cofactor.

The protein localises to the cytoplasm. The catalysed reaction is adenosine(2503) in 23S rRNA + 2 reduced [2Fe-2S]-[ferredoxin] + 2 S-adenosyl-L-methionine = 2-methyladenosine(2503) in 23S rRNA + 5'-deoxyadenosine + L-methionine + 2 oxidized [2Fe-2S]-[ferredoxin] + S-adenosyl-L-homocysteine. It carries out the reaction adenosine(37) in tRNA + 2 reduced [2Fe-2S]-[ferredoxin] + 2 S-adenosyl-L-methionine = 2-methyladenosine(37) in tRNA + 5'-deoxyadenosine + L-methionine + 2 oxidized [2Fe-2S]-[ferredoxin] + S-adenosyl-L-homocysteine. Functionally, specifically methylates position 2 of adenine 2503 in 23S rRNA and position 2 of adenine 37 in tRNAs. The sequence is that of Probable dual-specificity RNA methyltransferase RlmN from Streptomyces griseus subsp. griseus (strain JCM 4626 / CBS 651.72 / NBRC 13350 / KCC S-0626 / ISP 5235).